Here is a 178-residue protein sequence, read N- to C-terminus: Large ribosomal subunit protein uL5 (178 aa).

This sequence belongs to the universal ribosomal protein uL5 family. Part of the 50S ribosomal subunit; part of the 5S rRNA/L5/L18/L25 subcomplex. Contacts the 5S rRNA and the P site tRNA. Forms a bridge to the 30S subunit in the 70S ribosome.

Functionally, this is one of the proteins that bind and probably mediate the attachment of the 5S RNA into the large ribosomal subunit, where it forms part of the central protuberance. In the 70S ribosome it contacts protein S13 of the 30S subunit (bridge B1b), connecting the 2 subunits; this bridge is implicated in subunit movement. Contacts the P site tRNA; the 5S rRNA and some of its associated proteins might help stabilize positioning of ribosome-bound tRNAs. This Prochlorococcus marinus subsp. pastoris (strain CCMP1986 / NIES-2087 / MED4) protein is Large ribosomal subunit protein uL5.